A 344-amino-acid polypeptide reads, in one-letter code: uncharacterized protein (344 aa).

Belongs to the glycosyltransferase 28 family.

This is an uncharacterized protein from Methanopyrus kandleri (strain AV19 / DSM 6324 / JCM 9639 / NBRC 100938).